A 143-amino-acid polypeptide reads, in one-letter code: uncharacterized protein (143 aa).

The protein belongs to the OsmC/Ohr family.

This is an uncharacterized protein from Acinetobacter baylyi (strain ATCC 33305 / BD413 / ADP1).